Here is a 52-residue protein sequence, read N- to C-terminus: Rubredoxin (52 aa).

The Rubredoxin-like domain maps to 1 to 51 (MDKYECSICGYIYDEAEGDDGNVAAGTKFADLPADWVCPTCGADKDAFVKM). Fe cation is bound by residues cysteine 6, cysteine 9, cysteine 38, and cysteine 41.

Belongs to the rubredoxin family. Fe(3+) serves as cofactor.

Its function is as follows. Rubredoxin is a small nonheme, iron protein lacking acid-labile sulfide. Its single Fe, chelated to 4 Cys, functions as an electron acceptor and may also stabilize the conformation of the molecule. This is Rubredoxin from Megasphaera elsdenii.